The primary structure comprises 256 residues: Global transcriptional regulator CodY (256 aa).

The tract at residues 1 to 155 is GAF domain; it reads MSLLSKTREL…AATVIGMEIL (155 aa). A DNA-binding region (H-T-H motif) is located at residues 203-222; sequence ASKVADRVGITRSVIVNALR.

This sequence belongs to the CodY family.

The protein resides in the cytoplasm. Functionally, DNA-binding global transcriptional regulator which is involved in the adaptive response to starvation and acts by directly or indirectly controlling the expression of numerous genes in response to nutrient availability. During rapid exponential growth, CodY is highly active and represses genes whose products allow adaptation to nutrient depletion. The protein is Global transcriptional regulator CodY of Staphylococcus epidermidis (strain ATCC 35984 / DSM 28319 / BCRC 17069 / CCUG 31568 / BM 3577 / RP62A).